Here is a 520-residue protein sequence, read N- to C-terminus: Ubiquitin carboxyl-terminal hydrolase MINDY-1 (520 aa).

The interval 1 to 155 (MADSCADTVD…ENEGAVAGAM (155 aa)) is disordered. The segment covering 26-37 (KNEDLEQTKPQK) has biased composition (basic and acidic residues). Polar residues predominate over residues 43–54 (TEESSACVSQIK). The segment covering 77-86 (ATSSASVTSK) has biased composition (low complexity). 2 stretches are compositionally biased toward polar residues: residues 93 to 112 (VINS…SFSM) and 132 to 146 (SAKS…SVQE). C189 functions as the Nucleophile in the catalytic mechanism. The active-site Proton acceptor is the H371. Disordered regions lie at residues 422–441 (SQKP…QQMQ) and 467–520 (ELAR…CCIL). The tract at residues 441-479 (QIDQDYLVAMSLQQEQGEAPGPLSDLELARQLQQEEYQQ) is ubiquitin-binding domain (UBD). Low complexity predominate over residues 469–498 (ARQLQQEEYQQPQTQQQQQQQPSAGQMRGQ). The segment covering 511–520 (KKEETDCCIL) has biased composition (basic and acidic residues).

It belongs to the MINDY deubiquitinase family. FAM63 subfamily.

The catalysed reaction is Thiol-dependent hydrolysis of ester, thioester, amide, peptide and isopeptide bonds formed by the C-terminal Gly of ubiquitin (a 76-residue protein attached to proteins as an intracellular targeting signal).. Hydrolase that can specifically remove 'Lys-48'-linked conjugated ubiquitin from proteins. May play a regulatory role at the level of protein turnover. This Danio rerio (Zebrafish) protein is Ubiquitin carboxyl-terminal hydrolase MINDY-1 (mindy1).